The sequence spans 348 residues: Protein RecA (348 aa).

64–71 lines the ATP pocket; sequence GPESSGKT. A compositionally biased stretch (basic and acidic residues) spans 326–335; sequence EIDGTNKEPL. The tract at residues 326 to 348 is disordered; sequence EIDGTNKEPLDENEETLSLLDDE. Positions 336–348 are enriched in acidic residues; that stretch reads DENEETLSLLDDE.

It belongs to the RecA family.

The protein localises to the cytoplasm. In terms of biological role, can catalyze the hydrolysis of ATP in the presence of single-stranded DNA, the ATP-dependent uptake of single-stranded DNA by duplex DNA, and the ATP-dependent hybridization of homologous single-stranded DNAs. It interacts with LexA causing its activation and leading to its autocatalytic cleavage. The chain is Protein RecA from Listeria innocua serovar 6a (strain ATCC BAA-680 / CLIP 11262).